Here is a 398-residue protein sequence, read N- to C-terminus: Phospholipase C (398 aa).

An N-terminal signal peptide occupies residues 1 to 28 (MKRKICKALICATLATSLWAGASTKVYA). 9 residues coordinate Zn(2+): tryptophan 29, histidine 39, aspartate 84, histidine 96, histidine 154, aspartate 158, histidine 164, histidine 176, and glutamate 180. Positions 29-278 (WDGKIDGTGT…HDVSEGNDPS (250 aa)) constitute a Zn-dependent PLC domain. The interval 275–283 (NDPSVGKNV) is linker. In terms of domain architecture, PLAT spans 284–398 (KELVAYISTS…ISGNSTYNIK (115 aa)). Ca(2+) is bound by residues aspartate 297, glycine 299, threonine 300, aspartate 301, aspartate 321, asparagine 322, glycine 324, asparagine 325, aspartate 326, aspartate 364, and alanine 365.

The protein belongs to the bacterial zinc-metallophospholipase C family. Requires Ca(2+) as cofactor. Zn(2+) is required as a cofactor.

It localises to the secreted. The enzyme catalyses a 1,2-diacyl-sn-glycero-3-phosphocholine + H2O = phosphocholine + a 1,2-diacyl-sn-glycerol + H(+). Its function is as follows. Bacterial hemolysins are exotoxins that attack blood cell membranes and cause cell rupture. Constitutes an essential virulence factor in gas gangrene. Binds to eukaryotic membranes where it hydrolyzes both phosphatidylcholine and sphingomyelin. The diacylglycerol produced can activate both the arachidonic acid pathway, leading to modulation of the inflammatory response cascade and thrombosis, and protein kinase C, leading to activation of eukaryotic phospholipases and further membrane damage. Acts on human and mouse erythrocytes, but not on rabbit or horse erythrocytes. The chain is Phospholipase C (plc) from Clostridium perfringens (strain 13 / Type A).